We begin with the raw amino-acid sequence, 31 residues long: Photosystem I reaction center subunit XII (31 aa).

Residues 7–26 (QVFLALIIALIPGILADRLG) traverse the membrane as a helical segment.

It belongs to the PsaM family.

It is found in the plastid. It localises to the chloroplast thylakoid membrane. The sequence is that of Photosystem I reaction center subunit XII from Euglena deses.